The primary structure comprises 137 residues: Putative pre-16S rRNA nuclease (137 aa).

Belongs to the YqgF nuclease family.

The protein resides in the cytoplasm. Functionally, could be a nuclease involved in processing of the 5'-end of pre-16S rRNA. This Bacillus cytotoxicus (strain DSM 22905 / CIP 110041 / 391-98 / NVH 391-98) protein is Putative pre-16S rRNA nuclease.